A 485-amino-acid chain; its full sequence is Glutamyl-tRNA(Gln) amidotransferase subunit A (485 aa).

Active-site charge relay system residues include K78 and S153. The active-site Acyl-ester intermediate is S177.

It belongs to the amidase family. GatA subfamily. As to quaternary structure, heterotrimer of A, B and C subunits.

The catalysed reaction is L-glutamyl-tRNA(Gln) + L-glutamine + ATP + H2O = L-glutaminyl-tRNA(Gln) + L-glutamate + ADP + phosphate + H(+). Allows the formation of correctly charged Gln-tRNA(Gln) through the transamidation of misacylated Glu-tRNA(Gln) in organisms which lack glutaminyl-tRNA synthetase. The reaction takes place in the presence of glutamine and ATP through an activated gamma-phospho-Glu-tRNA(Gln). The protein is Glutamyl-tRNA(Gln) amidotransferase subunit A of Geotalea daltonii (strain DSM 22248 / JCM 15807 / FRC-32) (Geobacter daltonii).